The chain runs to 460 residues: Alpha-amylase (460 aa).

Residues 1–21 (MASRTLSGALALAAAATAVLA) form the signal peptide. Residues asparagine 121, glutamine 167, and aspartate 176 each coordinate Ca(2+). Residue aspartate 206 is the Nucleophile of the active site. Ca(2+) is bound at residue histidine 210. Glutamate 233 serves as the catalytic Proton donor.

The protein belongs to the glycosyl hydrolase 13 family. In terms of assembly, monomer. Ca(2+) is required as a cofactor.

It catalyses the reaction Endohydrolysis of (1-&gt;4)-alpha-D-glucosidic linkages in polysaccharides containing three or more (1-&gt;4)-alpha-linked D-glucose units.. The protein is Alpha-amylase (amy) of Streptomyces thermoviolaceus.